A 103-amino-acid chain; its full sequence is Large ribosomal subunit protein uL24 (103 aa).

Belongs to the universal ribosomal protein uL24 family. Part of the 50S ribosomal subunit.

Its function is as follows. One of two assembly initiator proteins, it binds directly to the 5'-end of the 23S rRNA, where it nucleates assembly of the 50S subunit. In terms of biological role, one of the proteins that surrounds the polypeptide exit tunnel on the outside of the subunit. The sequence is that of Large ribosomal subunit protein uL24 (rplX) from Bacillus spizizenii (strain ATCC 23059 / NRRL B-14472 / W23) (Bacillus subtilis subsp. spizizenii).